A 79-amino-acid polypeptide reads, in one-letter code: Protein S100-G (79 aa).

N-acetylserine is present on serine 2. 2 EF-hand domains span residues 13 to 48 (IFEK…KGPS) and 45 to 79 (KGPS…KISQ). Ca(2+) contacts are provided by glutamine 26 and glutamate 31. Serine 42 is subject to Phosphoserine. Positions 58, 60, 62, 64, and 69 each coordinate Ca(2+).

The protein belongs to the S-100 family.

This is Protein S100-G (S100G) from Bos taurus (Bovine).